We begin with the raw amino-acid sequence, 158 residues long: NAD(P)H-quinone oxidoreductase subunit J, chloroplastic (158 aa).

Belongs to the complex I 30 kDa subunit family. In terms of assembly, NDH is composed of at least 16 different subunits, 5 of which are encoded in the nucleus.

Its subcellular location is the plastid. The protein localises to the chloroplast thylakoid membrane. The catalysed reaction is a plastoquinone + NADH + (n+1) H(+)(in) = a plastoquinol + NAD(+) + n H(+)(out). It catalyses the reaction a plastoquinone + NADPH + (n+1) H(+)(in) = a plastoquinol + NADP(+) + n H(+)(out). Its function is as follows. NDH shuttles electrons from NAD(P)H:plastoquinone, via FMN and iron-sulfur (Fe-S) centers, to quinones in the photosynthetic chain and possibly in a chloroplast respiratory chain. The immediate electron acceptor for the enzyme in this species is believed to be plastoquinone. Couples the redox reaction to proton translocation, and thus conserves the redox energy in a proton gradient. The sequence is that of NAD(P)H-quinone oxidoreductase subunit J, chloroplastic from Lemna minor (Common duckweed).